A 501-amino-acid chain; its full sequence is Ribose import ATP-binding protein RbsA (501 aa).

ABC transporter domains are found at residues 6 to 242 (LQLS…VGRK) and 253 to 495 (VHGQ…VGKK). 38–45 (GENGAGKS) serves as a coordination point for ATP.

It belongs to the ABC transporter superfamily. Ribose importer (TC 3.A.1.2.1) family. In terms of assembly, the complex is composed of an ATP-binding protein (RbsA), two transmembrane proteins (RbsC) and a solute-binding protein (RbsB).

It localises to the cell inner membrane. It carries out the reaction D-ribose(out) + ATP + H2O = D-ribose(in) + ADP + phosphate + H(+). Part of the ABC transporter complex RbsABC involved in ribose import. Responsible for energy coupling to the transport system. This Vibrio vulnificus (strain YJ016) protein is Ribose import ATP-binding protein RbsA.